A 476-amino-acid polypeptide reads, in one-letter code: 2-(3-amino-3-carboxypropyl)histidine synthase subunit 2 (476 aa).

Residues 1-15 (MTESAPSAFFTTSTP) show a composition bias toward polar residues. A disordered region spans residues 1–24 (MTESAPSAFFTTSTPADHVHEEES). [4Fe-4S] cluster contacts are provided by Cys102, Cys123, and Cys347. A disordered region spans residues 451 to 476 (DGVSTAEDSTKMGEGRSGIAQGYSGK).

The protein belongs to the DPH1/DPH2 family. DPH2 subfamily. As to quaternary structure, component of the 2-(3-amino-3-carboxypropyl)histidine synthase complex composed of dph-1, dph-2, dph-3 and a NADH-dependent reductase. It depends on [4Fe-4S] cluster as a cofactor.

Its pathway is protein modification; peptidyl-diphthamide biosynthesis. Required for the first step of diphthamide biosynthesis, a post-translational modification of histidine which occurs in elongation factor 2. Dph-1 and dph-2 transfer a 3-amino-3-carboxypropyl (ACP) group from S-adenosyl-L-methionine (SAM) to a histidine residue, the reaction is assisted by a reduction system comprising dph-3 and a NADH-dependent reductase. Facilitates the reduction of the catalytic iron-sulfur cluster found in the dph-1 subunit. This chain is 2-(3-amino-3-carboxypropyl)histidine synthase subunit 2 (dph-2), found in Caenorhabditis elegans.